Consider the following 390-residue polypeptide: MPAGRRYGRTRRATLYVTKEGGGRPVAKRVLMAMSGGVDSSVAAALLVEQGYEVIGVTMNTWTDDIPEEIQMNQHSGCCSLAAVEDARSVAHKLGIPYYVMNFQGQFARTVIDYFIEEYTRGRTPNPCIACNRYVKFSAFLEKAKQLECDYVATGHYAVIGQDDRFPGRWLLGKSADARKDQTYVLHNLTQEALAHTLFPVGHLQKSEVRALAAKYGFVTADKPDSQEICFVYDNDYGRFLKERAPEAIVPGPILNTRGEVIGQHQGLPLYTIGQRKGLGLTTPRPVYVVDLDVERNAVIVGEDEETYRGGLVASDLNWIAIPGLTFPRRCRAKIRRMAPEAECTIYPIGEDAVRVEFDRPQRAITPGQAVVFYDGDWVLGGGTIERAIN.

Residues 33–40 and Met59 contribute to the ATP site; that span reads AMSGGVDS. Cys131 (nucleophile) is an active-site residue. Residues Cys131 and Cys230 are joined by a disulfide bond. Gly155 contributes to the ATP binding site. The interaction with tRNA stretch occupies residues 180 to 182; it reads KDQ. The Cysteine persulfide intermediate role is filled by Cys230.

Belongs to the MnmA/TRMU family.

The protein localises to the cytoplasm. It catalyses the reaction S-sulfanyl-L-cysteinyl-[protein] + uridine(34) in tRNA + AH2 + ATP = 2-thiouridine(34) in tRNA + L-cysteinyl-[protein] + A + AMP + diphosphate + H(+). In terms of biological role, catalyzes the 2-thiolation of uridine at the wobble position (U34) of tRNA, leading to the formation of s(2)U34. The chain is tRNA-specific 2-thiouridylase MnmA from Symbiobacterium thermophilum (strain DSM 24528 / JCM 14929 / IAM 14863 / T).